The primary structure comprises 144 residues: MKTFMAKPQDIKNRKWYVLDAEGKVLGRLAAEAARILRGKHKPDFTPHVDTGDHVIVINAEKVVLTGKKLRDKKYIRHSGYPGGLKVMNYEKLMKTRPELAVEKAIVGMLPHNRLGSRMAKKLKVYRGPEHPHQAQKPEPWQAL.

This sequence belongs to the universal ribosomal protein uL13 family. As to quaternary structure, part of the 50S ribosomal subunit.

Functionally, this protein is one of the early assembly proteins of the 50S ribosomal subunit, although it is not seen to bind rRNA by itself. It is important during the early stages of 50S assembly. The protein is Large ribosomal subunit protein uL13 of Pelotomaculum thermopropionicum (strain DSM 13744 / JCM 10971 / SI).